We begin with the raw amino-acid sequence, 283 residues long: Phospholipase C (283 aa).

An N-terminal signal peptide occupies residues 1-24; that stretch reads MKKKVLALAAAITVVAPLQSVAFA. The propeptide occupies 25–38; that stretch reads HENDGGSKIKIVHR. 9 residues coordinate Zn(2+): Trp39, His52, Asp93, His107, His156, Asp160, His166, His180, and Glu184. The Zn-dependent PLC domain maps to 39–283; it reads WSAEDKHKEG…QLWFDTYGDR (245 aa).

It belongs to the bacterial zinc-metallophospholipase C family. In terms of assembly, monomer. It depends on Zn(2+) as a cofactor.

The catalysed reaction is a 1,2-diacyl-sn-glycero-3-phosphocholine + H2O = phosphocholine + a 1,2-diacyl-sn-glycerol + H(+). Functionally, required, with sphingomyelinase, to effect target cell lysis (hemolysis). This chain is Phospholipase C (plc), found in Bacillus cereus.